Reading from the N-terminus, the 558-residue chain is Atlastin-1 (558 aa).

Positions 1–28 (MAKNRRDRNSWGGFSEKTYEWSSEEEEP) are disordered. The interval 1 to 34 (MAKNRRDRNSWGGFSEKTYEWSSEEEEPVKKAGP) is N-terminal hypervariable region (HVR). The Cytoplasmic segment spans residues 1–449 (MAKNRRDRNS…NIFHAARTPA (449 aa)). Phosphoserine is present on residues S10, S22, and S23. Positions 64–309 (DKEVVAVSVA…LIPWLLSPES (246 aa)) constitute a GB1/RHD3-type G domain. GDP is bound by residues R77, K78, G79, K80, S81, F82, Q148, R217, D218, V276, and N279. GTP is bound by residues R77, K78, G79, K80, S81, and F82. S81 is a binding site for Mg(2+). The GTP site is built by R217, D218, and V276. A 3HB (three-helix bundle) domain region spans residues 347 to 438 (MLQATAEANN…YIQYIKHNDS (92 aa)). An N6-acetyllysine modification is found at K395. The stretch at 418-439 (LQQLETEIDELYIQYIKHNDSK) forms a coiled coil. The tract at residues 439-447 (KNIFHAART) is linker. Residues 450 to 470 (TLFVVIFITYVIAGVTGFIGL) traverse the membrane as a helical segment. A topological domain (lumenal) is located at residue D471. The helical transmembrane segment at 472–492 (IIASLCNMIMGLTLITLCTWA) threads the bilayer. Over 493–558 (YIRYSGEYRE…STEQSEKKKM (66 aa)) the chain is Cytoplasmic. The interval 521 to 558 (NEALYKLYSAAATHRHLYHQAFPAPKSESTEQSEKKKM) is autoinhibitory domain.

This sequence belongs to the TRAFAC class dynamin-like GTPase superfamily. GB1/RHD3 GTPase family. GB1 subfamily. In terms of assembly, monomeric and homodimeric. The homodimer, transiently formed by two molecules on opposing membranes, is the active form mediating ER membrane fusion. Interacts with REEP1, REEP5, RTN3 and RTN4 (via the transmembrane region); these proteins are involved in endoplasmic reticulum tubular network organization. Interacts with ZFYVE27; both proteins are involved in endoplasmic reticulum tubular network organization. Interacts with ARL6IP1; both proteins are involved in endoplasmic reticulum tubular network organization. Interacts with SPAST; the interaction is direct, could recruit SPAST to Golgi membranes. Interacts (via N-terminal region) with MAP4K4 (via CNH regulatory domain). May interact with TMED2. Interacts with CPT1C. Phosphorylated. Phosphorylation, by different kinases, of the N-terminal hypervariable region (HVR) regulates the ATL1-mediated membrane tethering step.

The protein resides in the endoplasmic reticulum membrane. It is found in the golgi apparatus membrane. Its subcellular location is the cell projection. The protein localises to the axon. It catalyses the reaction GTP + H2O = GDP + phosphate + H(+). Functionally, atlastin-1 (ATL1) is a membrane-anchored GTPase that mediates the GTP-dependent fusion of endoplasmic reticulum (ER) membranes, maintaining the continuous ER network. It facilitates the formation of three-way junctions where ER tubules intersect. Two atlastin-1 on neighboring ER tubules bind GTP and form loose homodimers through the GB1/RHD3-type G domains and 3HB regions. Upon GTP hydrolysis, the 3HB regions tighten, pulling the membranes together to drive their fusion. After fusion, the homodimer disassembles upon release of inorganic phosphate (Pi). Subsequently, GDP dissociates, resetting the monomers to a conformation ready for a new fusion cycle. May also regulate more or less directly Golgi biogenesis. Indirectly regulates axonal development. This is Atlastin-1 from Bos taurus (Bovine).